The following is a 138-amino-acid chain: Invertebrate-type lysozyme 6 (138 aa).

Positions 1–18 (MFVKLCGILAFAVTYASS) are cleaved as a signal peptide. One can recognise an I-type lysozyme domain in the interval 19–138 (DCLQCICKKE…WNGIKGLGCS (120 aa)). 6 disulfides stabilise this stretch: Cys-20–Cys-106, Cys-25–Cys-31, Cys-36–Cys-45, Cys-58–Cys-86, Cys-76–Cys-82, and Cys-98–Cys-120. Glu-28 (proton donor) is an active-site residue. Catalysis depends on Asp-39, which acts as the Nucleophile. A substrate-binding site is contributed by 51–57 (KLSYYKD). Substrate is bound by residues Tyr-90 and 113 to 115 (HNG).

It belongs to the glycosyl hydrolase 22 family. Type-I lysozyme subfamily. Expressed in pharyngeal gland cells and duct projections, coelomocytes and intestine.

It carries out the reaction Hydrolysis of (1-&gt;4)-beta-linkages between N-acetylmuramic acid and N-acetyl-D-glucosamine residues in a peptidoglycan and between N-acetyl-D-glucosamine residues in chitodextrins.. Has bacteriolytic activity against Gram-positive bacteria. This Caenorhabditis elegans protein is Invertebrate-type lysozyme 6.